A 68-amino-acid chain; its full sequence is Adipokinetic prohormone type 1 (68 aa).

The signal sequence occupies residues 1–20; sequence MNYVSIFVLIVACLCVLADA. Gln-21 carries the post-translational modification Pyrrolidone carboxylic acid. Residue Gly-30 is modified to Glycine amide. Residues 34 to 68 constitute a propeptide that is removed on maturation; sequence GAVAATMSCRSEETIAAIYKLIQNEAERLLLCQKP.

In terms of tissue distribution, expressed in antennal lobe (AL), corpora cardiaca (CC), corpora allata (CA) and gnathal ganglion (GNG) (at protein level). Expression in CC and CA detected in all animals, expression in GNG in some animals and in AL in few animals (at protein level).

Its subcellular location is the secreted. Functionally, this hormone, released from cells in the corpora cardiaca, causes release of diglycerides from the fat body and stimulation of muscles to use these diglycerides as an energy source during energy-demanding processes. The protein is Adipokinetic prohormone type 1 of Agrotis ipsilon (Black cutworm moth).